A 91-amino-acid polypeptide reads, in one-letter code: Small ribosomal subunit protein uS19 (91 aa).

The interval 1–32 (MPRSIKKGPFIDEHLDRKVQSAQASNSRRPIK) is disordered. The segment covering 9-19 (PFIDEHLDRKV) has biased composition (basic and acidic residues).

The protein belongs to the universal ribosomal protein uS19 family.

Protein S19 forms a complex with S13 that binds strongly to the 16S ribosomal RNA. This is Small ribosomal subunit protein uS19 from Acidithiobacillus ferrooxidans (strain ATCC 53993 / BNL-5-31) (Leptospirillum ferrooxidans (ATCC 53993)).